A 417-amino-acid chain; its full sequence is 3-isopropylmalate dehydratase large subunit (417 aa).

The [4Fe-4S] cluster site is built by Cys298, Cys358, and Cys361.

Belongs to the aconitase/IPM isomerase family. LeuC type 2 subfamily. Heterodimer of LeuC and LeuD. Requires [4Fe-4S] cluster as cofactor.

The enzyme catalyses (2R,3S)-3-isopropylmalate = (2S)-2-isopropylmalate. The protein operates within amino-acid biosynthesis; L-leucine biosynthesis; L-leucine from 3-methyl-2-oxobutanoate: step 2/4. Its function is as follows. Catalyzes the isomerization between 2-isopropylmalate and 3-isopropylmalate, via the formation of 2-isopropylmaleate. The protein is 3-isopropylmalate dehydratase large subunit of Thermoanaerobacter pseudethanolicus (strain ATCC 33223 / 39E) (Clostridium thermohydrosulfuricum).